The chain runs to 710 residues: F-box only protein 40 (710 aa).

The TRAF-type zinc finger occupies 53 to 114; that stretch reads EHTLLCPLEQ…VDSETFLHEN (62 aa). 2 disordered regions span residues 152-174 and 234-279; these read DATEEEPDMNGDTSWEETGGAVG and GSLG…SQEL. Over residues 238 to 248 the composition is skewed to basic and acidic residues; the sequence is KSEDKNGDVAG. Positions 572–626 constitute an F-box domain; the sequence is LNSLTSLPLEVLQYIAGFLDSISLSQLSQVSVLMRNICATLLQERGMVLSQWKKK.

Directly interacts with SKP1 and CUL1. Expressed only in heart and skeletal muscle.

It is found in the cytoplasm. In terms of biological role, probable substrate-recognition component of the SCF (SKP1-CUL1-F-box protein)-type E3 ubiquitin ligase complex that may function in myogenesis. In Mus musculus (Mouse), this protein is F-box only protein 40 (Fbxo40).